The primary structure comprises 203 residues: Outer-membrane lipoprotein LolB (203 aa).

Residues 1 to 18 (MTLRSFLILLLSSIVLAG) form the signal peptide. A lipid anchor (N-palmitoyl cysteine) is attached at Cys-19. Cys-19 carries the S-diacylglycerol cysteine lipid modification.

It belongs to the LolB family. As to quaternary structure, monomer.

The protein localises to the cell outer membrane. Its function is as follows. Plays a critical role in the incorporation of lipoproteins in the outer membrane after they are released by the LolA protein. The chain is Outer-membrane lipoprotein LolB from Vibrio campbellii (strain ATCC BAA-1116).